Here is a 346-residue protein sequence, read N- to C-terminus: uncharacterized protein (346 aa).

The next 8 helical transmembrane spans lie at 15-35, 55-75, 93-113, 139-159, 182-202, 229-249, 269-289, and 295-315; these read YLRGFALLGIILVNILGLLTV, VEARFYPIFSFLFGVGFYLFI, ILVLFIFGFIHFLFQPGEALT, ILLLFVSIFAAKIFMPLPLIL, IFTFFMFILSVGGLLLQYCYV, LGVATGPILSAFYAGFLLLLL, LTNYISQTALILLAGKLFHLF, and LQSLWLCLAIYVIQLIFSAMW.

The protein to E.coli YeiB, B.subtilis YxaH and B.subtilis YrkO.

It is found in the cell membrane. Involved in transport. This is an uncharacterized protein from Bacillus acidopullulyticus.